A 444-amino-acid chain; its full sequence is Putative F-box protein At1g64540 (444 aa).

The F-box domain occupies 4–50 (REFISNLPDEILGKILSLLPTKLGVSTSVLSKRWRNLILLVDNFDLE).

This Arabidopsis thaliana (Mouse-ear cress) protein is Putative F-box protein At1g64540.